The chain runs to 98 residues: UPF0235 protein Pmen_4153 (98 aa).

This sequence belongs to the UPF0235 family.

The polypeptide is UPF0235 protein Pmen_4153 (Ectopseudomonas mendocina (strain ymp) (Pseudomonas mendocina)).